A 39-amino-acid polypeptide reads, in one-letter code: uncharacterized protein (39 aa).

This is an uncharacterized protein from Treponema pallidum (strain Nichols).